The chain runs to 147 residues: Deoxyuridine 5'-triphosphate nucleotidohydrolase (147 aa).

Substrate is bound by residues 63-65 (RSG), Asn76, and 80-82 (TID).

This sequence belongs to the dUTPase family. Mg(2+) is required as a cofactor.

It catalyses the reaction dUTP + H2O = dUMP + diphosphate + H(+). It functions in the pathway pyrimidine metabolism; dUMP biosynthesis; dUMP from dCTP (dUTP route): step 2/2. In terms of biological role, this enzyme is involved in nucleotide metabolism: it produces dUMP, the immediate precursor of thymidine nucleotides and it decreases the intracellular concentration of dUTP so that uracil cannot be incorporated into DNA. This is Deoxyuridine 5'-triphosphate nucleotidohydrolase from Chlamydia abortus (strain DSM 27085 / S26/3) (Chlamydophila abortus).